We begin with the raw amino-acid sequence, 777 residues long: Biotin sulfoxide reductase (777 aa).

Ser-148 is a Mo-bis(molybdopterin guanine dinucleotide) binding site.

Belongs to the prokaryotic molybdopterin-containing oxidoreductase family. It depends on Mo-bis(molybdopterin guanine dinucleotide) as a cofactor.

It carries out the reaction [thioredoxin]-disulfide + L-methionine + H2O = L-methionine (S)-S-oxide + [thioredoxin]-dithiol. This enzyme may serve as a scavenger, allowing the cell to utilize biotin sulfoxide as a biotin source. It reduces a spontaneous oxidation product of biotin, D-biotin D-sulfoxide (BSO or BDS), back to biotin. Also exhibits methionine-(S)-sulfoxide (Met-S-SO) reductase activity, acting specifically on the (S) enantiomer in the free, but not the protein-bound form. It thus plays a role in assimilation of oxidized methionines. The protein is Biotin sulfoxide reductase (bisC) of Escherichia coli (strain K12).